The primary structure comprises 473 residues: Zinc finger and BTB domain-containing protein 9 (473 aa).

The BTB domain maps to 48–112 (CDVSLLVQGR…IYSGRLRLPL (65 aa)). The interval 177–279 (QTPVQSSAST…LELPAPPALP (103 aa)) is disordered. Low complexity predominate over residues 182 to 196 (SSASTESPASTESPV). A compositionally biased stretch (acidic residues) spans 211–226 (VEEEEEEEEDDDDEDQ). Residues 227–239 (GSATLSQTPQPQR) are compositionally biased toward polar residues. Lys-286 participates in a covalent cross-link: Glycyl lysine isopeptide (Lys-Gly) (interchain with G-Cter in SUMO1); alternate. Residue Lys-286 forms a Glycyl lysine isopeptide (Lys-Gly) (interchain with G-Cter in SUMO2); alternate linkage. Glycyl lysine isopeptide (Lys-Gly) (interchain with G-Cter in SUMO2) cross-links involve residues Lys-293 and Lys-307. The disordered stretch occupies residues 293–376 (KEEISGSGTQ…VHGPVKLGGT (84 aa)). The span at 355 to 364 (SGGGGPGGAG) shows a compositional bias: gly residues. Lys-382 is covalently cross-linked (Glycyl lysine isopeptide (Lys-Gly) (interchain with G-Cter in SUMO2)). A C2H2-type 1 zinc finger spans residues 411–433 (FGCGICNKRFKLKHHLTEHMKTH). Residues 438-460 (HACPHCGRRFRVHACFLRHRDLC) form a C2H2-type 2; atypical zinc finger.

The protein resides in the nucleus. Functionally, may be involved in transcriptional regulation. The chain is Zinc finger and BTB domain-containing protein 9 (ZBTB9) from Homo sapiens (Human).